A 310-amino-acid chain; its full sequence is Tagatose-6-phosphate kinase (310 aa).

The protein belongs to the carbohydrate kinase PfkB family. LacC subfamily.

The enzyme catalyses D-tagatofuranose 6-phosphate + ATP = D-tagatofuranose 1,6-bisphosphate + ADP + H(+). Its pathway is carbohydrate metabolism; D-tagatose 6-phosphate degradation; D-glyceraldehyde 3-phosphate and glycerone phosphate from D-tagatose 6-phosphate: step 1/2. This is Tagatose-6-phosphate kinase from Staphylococcus aureus (strain USA300 / TCH1516).